The chain runs to 123 residues: Large ribosomal subunit protein bL12 (123 aa).

This sequence belongs to the bacterial ribosomal protein bL12 family. As to quaternary structure, homodimer. Part of the ribosomal stalk of the 50S ribosomal subunit. Forms a multimeric L10(L12)X complex, where L10 forms an elongated spine to which 2 to 4 L12 dimers bind in a sequential fashion. Binds GTP-bound translation factors.

Functionally, forms part of the ribosomal stalk which helps the ribosome interact with GTP-bound translation factors. Is thus essential for accurate translation. In Bartonella bacilliformis (strain ATCC 35685 / KC583 / Herrer 020/F12,63), this protein is Large ribosomal subunit protein bL12.